The following is a 1203-amino-acid chain: Protein patched homolog 2 (1203 aa).

Topologically, residues 1 to 57 are cytoplasmic; it reads MTRSPPLRELPPSYTPPARTAAPQILAGSLKAPLWLRAYFQGLLFSLGCGIQRHCGK. A helical membrane pass occupies residues 58 to 78; the sequence is VLFLGLLAFGALALGLRMAII. The Extracellular segment spans residues 79 to 392; sequence ETNLEQLWVE…LDDILHAFSE (314 aa). N-linked (GlcNAc...) asparagine glycosylation occurs at N370. Residues 393-413 traverse the membrane as a helical segment; it reads VSAARVVGGYLLMLAYACVTM. The region spanning 394 to 552 is the SSD domain; it reads SAARVVGGYL…MLVFPAILSL (159 aa). Residues 414–428 lie on the Cytoplasmic side of the membrane; that stretch reads LRWDCAQSQGSVGLA. Residues 429–449 traverse the membrane as a helical segment; sequence GVLLVALAVASGLGLCALLGI. Topologically, residues 450-457 are extracellular; it reads TFNAATTQ. The chain crosses the membrane as a helical span at residues 458–478; that stretch reads VLPFLALGIGVDDVFLLAHAF. The Cytoplasmic portion of the chain corresponds to 479–501; that stretch reads TEALPGTPLQERMGECLQRTGTS. The chain crosses the membrane as a helical span at residues 502 to 522; it reads VVLTSINNMAAFLMAALVPIP. Residues 523-531 lie on the Extracellular side of the membrane; it reads ALRAFSLQA. Residues 532–552 form a helical membrane-spanning segment; the sequence is AIVVGCTFVAVMLVFPAILSL. Residues 553 to 686 lie on the Cytoplasmic side of the membrane; that stretch reads DLRRRHCQRL…APLLLQSHAK (134 aa). The chain crosses the membrane as a helical span at residues 687–707; the sequence is AIVLVLFGALLGLSLYGATLV. At 708–963 the chain is on the extracellular side; that stretch reads QDGLALTDVV…WEQYLGLRRC (256 aa). N812 is a glycosylation site (N-linked (GlcNAc...) asparagine). Residues 964-984 form a helical membrane-spanning segment; sequence FLLAVCILLVCTFLVCALLLL. At 985 to 991 the chain is on the cytoplasmic side; it reads NPWTAGL. The helical transmembrane segment at 992-1012 threads the bilayer; sequence IVLVLAMMTVELFGIMGFLGI. Residue K1013 is a topological domain, extracellular. Residues 1014-1034 traverse the membrane as a helical segment; it reads LSAIPVVILVASVGIGVEFTV. At 1035–1064 the chain is on the cytoplasmic side; it reads HVALGFLTTQGSRNLRAAHALEHTFAPVTD. The chain crosses the membrane as a helical span at residues 1065 to 1085; sequence GAISTLLGLLMLAGSHFDFIV. Residues 1086–1093 are Extracellular-facing; it reads RYFFAALT. The helical transmembrane segment at 1094–1114 threads the bilayer; it reads VLTLLGLLHGLVLLPVLLSIL. Residues 1115–1203 are Cytoplasmic-facing; the sequence is GPPPEVIQMY…SSRGPGPATG (89 aa). The interval 1171 to 1203 is disordered; the sequence is GAYIHPAPDEPPWSPAATSSGNLSSRGPGPATG. Residues 1186–1195 show a composition bias toward polar residues; sequence AATSSGNLSS.

This sequence belongs to the patched family.

It is found in the membrane. Functionally, plays a role in the control of cellular growth. May have a role in epidermal development. May act as a receptor for Sonic hedgehog (SHH). The protein is Protein patched homolog 2 (PTCH2) of Homo sapiens (Human).